The sequence spans 253 residues: tRNA 2'-phosphotransferase 1 (253 aa).

N-acetylmethionine is present on M1. Disordered regions lie at residues 1-29 (MNFS…DRDV) and 225-253 (KPLS…RIQQ). At S240 the chain carries Phosphoserine. Residues 243-253 (HSSRERRRIQQ) are compositionally biased toward basic residues.

It belongs to the KptA/TPT1 family. As to expression, widely expressed. Weakly or not expressed in lung, spleen, small intestine and peripheral blood leukocytes.

It catalyses the reaction 2'-phospho-[ligated tRNA] + NAD(+) = mature tRNA + ADP-alpha-D-ribose 1'',2''-cyclic phosphate + nicotinamide. Its function is as follows. Catalyzes the last step of tRNA splicing, the transfer of the splice junction 2'-phosphate from ligated tRNA to NAD to produce ADP-ribose 1''-2'' cyclic phosphate. The sequence is that of tRNA 2'-phosphotransferase 1 (TRPT1) from Homo sapiens (Human).